The primary structure comprises 523 residues: FAD-dependent monooxygenase drtC (523 aa).

Positions 77 to 252 constitute an FAD-binding PCMH-type domain; that stretch reads TSLNSACIVL…TNFEVRAFPQ (176 aa).

The protein belongs to the oxygen-dependent FAD-linked oxidoreductase family. Requires FAD as cofactor.

It functions in the pathway secondary metabolite biosynthesis; terpenoid biosynthesis. Functionally, FAD-dependent monooxygenase; part of the gene cluster that mediates the biosynthesis of various drimane-type sesquiterpene esters, compounds that exhibit diverse biological activities and are widely present in eukaryotes. The pathway begins with the synthesis of the backbone drimenol by the terpene cyclase drtB using farnesyl pyrophosphate (FPP) as substrate. The cytochrome P450 monooxygenase drtD is then responsible for the hydroxylations at C-6, C-9 and C-12, as well as the oxidation of hydroxyl groups at C-6 and C-11 to a ketone and an aldehyde, respectively. Then, the biosynthesis can go in two directions, either the hydroxylated drimenol is further hydroxylated at C-2 and C-3 by an enzyme(s) not associated with the drt cluster, or the FAD-binding oxidoreductase drtC further oxidizes C-11 or C-12 to form the butyrolactone ring. DrtB, drtD and drtC are solely responsible for the formation of the different drimane structures observed during drimane sesquiterpenes biosynthesis. The polyketide synthase drtA synthesizes different lengths (C6 and C8) of PKS chains, which are then oxidized to varying degrees by the short-chain dehydrogenase drtF. Finally, these PKS chains are transferred onto drimane sesquiterpenes by the acyltransferase drtE, forming the sesquiterpene esters. In addition to the different fatty acyl-CoA chains produced by drtA, drtE is also able to use cinnamoyl-CoA as a substrate. This chain is FAD-dependent monooxygenase drtC, found in Aspergillus calidoustus.